The chain runs to 666 residues: DNA mismatch repair protein MutL (666 aa).

It belongs to the DNA mismatch repair MutL/HexB family.

Functionally, this protein is involved in the repair of mismatches in DNA. It is required for dam-dependent methyl-directed DNA mismatch repair. May act as a 'molecular matchmaker', a protein that promotes the formation of a stable complex between two or more DNA-binding proteins in an ATP-dependent manner without itself being part of a final effector complex. The polypeptide is DNA mismatch repair protein MutL (Clostridium botulinum (strain Langeland / NCTC 10281 / Type F)).